The primary structure comprises 291 residues: 33 kDa chaperonin (291 aa).

2 cysteine pairs are disulfide-bonded: Cys229–Cys231 and Cys262–Cys265.

Belongs to the HSP33 family. Post-translationally, under oxidizing conditions two disulfide bonds are formed involving the reactive cysteines. Under reducing conditions zinc is bound to the reactive cysteines and the protein is inactive.

Its subcellular location is the cytoplasm. In terms of biological role, redox regulated molecular chaperone. Protects both thermally unfolding and oxidatively damaged proteins from irreversible aggregation. Plays an important role in the bacterial defense system toward oxidative stress. The protein is 33 kDa chaperonin of Vibrio parahaemolyticus serotype O3:K6 (strain RIMD 2210633).